The primary structure comprises 428 residues: Adenylosuccinate synthetase (428 aa).

GTP is bound by residues 12–18 (GDEGKGK) and 40–42 (GHT). Asp-13 (proton acceptor) is an active-site residue. Positions 13 and 40 each coordinate Mg(2+). IMP is bound by residues 13–16 (DEGK), 38–41 (NAGH), Thr-130, Arg-144, Gln-225, Thr-240, and Arg-304. The active-site Proton donor is the His-41. Substrate is bound at residue 300 to 306 (VTTGRAR). Residues Arg-306, 332 to 334 (KID), and 414 to 416 (SVG) contribute to the GTP site.

Belongs to the adenylosuccinate synthetase family. As to quaternary structure, homodimer. Mg(2+) is required as a cofactor.

It is found in the cytoplasm. The enzyme catalyses IMP + L-aspartate + GTP = N(6)-(1,2-dicarboxyethyl)-AMP + GDP + phosphate + 2 H(+). It participates in purine metabolism; AMP biosynthesis via de novo pathway; AMP from IMP: step 1/2. Functionally, plays an important role in the de novo pathway of purine nucleotide biosynthesis. Catalyzes the first committed step in the biosynthesis of AMP from IMP. This Clostridium botulinum (strain Loch Maree / Type A3) protein is Adenylosuccinate synthetase.